Consider the following 334-residue polypeptide: Ketol-acid reductoisomerase (NADP(+)) (334 aa).

One can recognise a KARI N-terminal Rossmann domain in the interval Met-1 to Thr-181. Residues Tyr-24–Gln-27, Arg-47, Ser-50, Ser-52, and Asp-82–Gln-85 contribute to the NADP(+) site. The active site involves His-107. Gly-133 serves as a coordination point for NADP(+). In terms of domain architecture, KARI C-terminal knotted spans Ser-182 to Ile-323. Positions 190, 194, 226, and 230 each coordinate Mg(2+). Ser-251 lines the substrate pocket.

This sequence belongs to the ketol-acid reductoisomerase family. The cofactor is Mg(2+).

The enzyme catalyses (2R)-2,3-dihydroxy-3-methylbutanoate + NADP(+) = (2S)-2-acetolactate + NADPH + H(+). The catalysed reaction is (2R,3R)-2,3-dihydroxy-3-methylpentanoate + NADP(+) = (S)-2-ethyl-2-hydroxy-3-oxobutanoate + NADPH + H(+). Its pathway is amino-acid biosynthesis; L-isoleucine biosynthesis; L-isoleucine from 2-oxobutanoate: step 2/4. It functions in the pathway amino-acid biosynthesis; L-valine biosynthesis; L-valine from pyruvate: step 2/4. Involved in the biosynthesis of branched-chain amino acids (BCAA). Catalyzes an alkyl-migration followed by a ketol-acid reduction of (S)-2-acetolactate (S2AL) to yield (R)-2,3-dihydroxy-isovalerate. In the isomerase reaction, S2AL is rearranged via a Mg-dependent methyl migration to produce 3-hydroxy-3-methyl-2-ketobutyrate (HMKB). In the reductase reaction, this 2-ketoacid undergoes a metal-dependent reduction by NADPH to yield (R)-2,3-dihydroxy-isovalerate. The protein is Ketol-acid reductoisomerase (NADP(+)) of Ruthia magnifica subsp. Calyptogena magnifica.